A 223-amino-acid polypeptide reads, in one-letter code: MAKVNAFSKKIGWIELITGPMFAGKTAELIRRLHRLEYADVKYLVFKPKIDTRSIRNIQSRTGTSLPSVEVESAPEILNYIMSNSFNDETKVIGIDEVQFFDDRICEVANILAENGFVVIISGLDKNFKGEPFGPIAKLFTYADKITKLTAICNECGAEATHSLRKIDGKHADYNDDIVKIGCQEFYSAVCRHHHKVPNRPYLNSNSEEFIKFFKNKKRNKNI.

Residues 19–26 and 96–99 contribute to the ATP site; these read GPMFAGKT and DEVQ. The active-site Proton acceptor is glutamate 97. Positions 153, 156, 191, and 194 each coordinate Zn(2+).

It belongs to the thymidine kinase family. In terms of assembly, homotetramer.

It localises to the cytoplasm. The catalysed reaction is thymidine + ATP = dTMP + ADP + H(+). The sequence is that of Thymidine kinase from Ureaplasma parvum serovar 3 (strain ATCC 27815 / 27 / NCTC 11736).